The following is a 73-amino-acid chain: MNLETPSQENLNFMLTEITTKLKMVNVGVFENLELDSVDYNALIDIYQLIKRKSNFSPREMQLFAEELRRIRK.

Belongs to the UPF0435 family.

The chain is UPF0435 protein Lm4b_01721 from Listeria monocytogenes serotype 4b (strain CLIP80459).